We begin with the raw amino-acid sequence, 106 residues long: Small ribosomal subunit protein uS10 (106 aa).

Belongs to the universal ribosomal protein uS10 family. In terms of assembly, part of the 30S ribosomal subunit.

Involved in the binding of tRNA to the ribosomes. In Parasynechococcus marenigrum (strain WH8102), this protein is Small ribosomal subunit protein uS10.